We begin with the raw amino-acid sequence, 339 residues long: Tetraacyldisaccharide 4'-kinase (339 aa).

62-69 (VAGGTGKT) contributes to the ATP binding site.

It belongs to the LpxK family.

It carries out the reaction a lipid A disaccharide + ATP = a lipid IVA + ADP + H(+). It participates in glycolipid biosynthesis; lipid IV(A) biosynthesis; lipid IV(A) from (3R)-3-hydroxytetradecanoyl-[acyl-carrier-protein] and UDP-N-acetyl-alpha-D-glucosamine: step 6/6. Functionally, transfers the gamma-phosphate of ATP to the 4'-position of a tetraacyldisaccharide 1-phosphate intermediate (termed DS-1-P) to form tetraacyldisaccharide 1,4'-bis-phosphate (lipid IVA). This Xylella fastidiosa (strain M12) protein is Tetraacyldisaccharide 4'-kinase.